We begin with the raw amino-acid sequence, 518 residues long: UPF0053 inner membrane protein YoaE (518 aa).

Over 1–13 the chain is Cytoplasmic; sequence MEFLMDPSIWAGL. The chain crosses the membrane as a helical span at residues 14–34; it reads LTLVVLEIVLGIDNLVFIAIL. Topologically, residues 35 to 48 are periplasmic; it reads ADKLPPKQRDKARL. The helical transmembrane segment at 49 to 69 threads the bilayer; sequence LGLSLALIMRLGLLSLISWMV. Topologically, residues 70-78 are cytoplasmic; that stretch reads TLTKPLFTV. A helical transmembrane segment spans residues 79 to 99; sequence MDFSFSGRDLIMLFGGIFLLF. At 100 to 124 the chain is on the periplasmic side; that stretch reads KATTELHERLENRDHDSGHGKGYAS. Residues 125-145 form a helical membrane-spanning segment; that stretch reads FWVVVTQIVILDAVFSLDAVI. At 146-149 the chain is on the cytoplasmic side; that stretch reads TAVG. The helical transmembrane segment at 150–170 threads the bilayer; that stretch reads MVNHLPVMMAAVVIAMAVMLL. The Periplasmic segment spans residues 171 to 184; the sequence is ASKPLTRFVNQHPT. Residues 185–205 form a helical membrane-spanning segment; the sequence is VVVLCLSFLLMIGLSLVAEGF. Position 206 (Gly206) is a topological domain, cytoplasmic. Residues 207 to 227 traverse the membrane as a helical segment; that stretch reads FHIPKGYLYAAIGFSIIIEVF. At 228–354 the chain is on the periplasmic side; the sequence is NQIARRNFIR…IGIVRAKELL (127 aa). 2 consecutive CBS domains span residues 304-363 and 367-427; these read MTPR…GVDV and ASAS…DADE. The helical transmembrane segment at 355–375 threads the bilayer; that stretch reads VALEEGVDVAAIASASPAIIV. Topologically, residues 376 to 518 are cytoplasmic; sequence PETLDPINLL…KEQPAHDEDE (143 aa).

Belongs to the UPF0053 family.

It localises to the cell inner membrane. The chain is UPF0053 inner membrane protein YoaE (yoaE) from Escherichia coli O157:H7.